An 89-amino-acid polypeptide reads, in one-letter code: UPF0297 protein SUB1776 (89 aa).

The protein belongs to the UPF0297 family.

The protein is UPF0297 protein SUB1776 of Streptococcus uberis (strain ATCC BAA-854 / 0140J).